The chain runs to 362 residues: Molybdopterin synthase catalytic subunit (362 aa).

Residues 101 to 102 (HR), Lys117, and 124 to 126 (KKE) contribute to the substrate site.

This sequence belongs to the MoaE family. MOCS2B subfamily. As to quaternary structure, heterotetramer; composed of 2 small (Mocs2A) and 2 large (Mocs2B) subunits.

The protein resides in the cytoplasm. It catalyses the reaction 2 [molybdopterin-synthase sulfur-carrier protein]-C-terminal-Gly-aminoethanethioate + cyclic pyranopterin phosphate + H2O = molybdopterin + 2 [molybdopterin-synthase sulfur-carrier protein]-C-terminal Gly-Gly + 2 H(+). The protein operates within cofactor biosynthesis; molybdopterin biosynthesis. Its function is as follows. Catalytic subunit of the molybdopterin synthase complex, a complex that catalyzes the conversion of precursor Z into molybdopterin. Acts by mediating the incorporation of 2 sulfur atoms from thiocarboxylated Mocs2A into precursor Z to generate a dithiolene group. The sequence is that of Molybdopterin synthase catalytic subunit from Drosophila grimshawi (Hawaiian fruit fly).